The sequence spans 2028 residues: MSSFLRGGHLLSGVESLTPTTHRDTITAPIVESLATPLRRSLERYPWSIPKEFHSFLHTCGVDISGFGHAAHPHPVHKTIETHLLLDVWPNYARGPSDVMFIKPEKFAKLQSRQPNFAHLINYRLVPKDTTRYPSTSTNLPDCETVFMHDALMYYTPGQIADLFFLCPQLQKIYASVVVPAESSFTHLSLHPELYRFRFQGSDLVYEPEGNPAANYTQPRSALDWLQTTGFTVGHEFFSVTLLDSFGPVHSLLIQRGRPPVFQAEDIASFRVPDAVALPAPASLHQDLRHRLVPRKVYDALFNYVRAVRTLRVTDPAGFVRTQVGKPEYSWVTSSAWDNLQHFALQTAAVRPNTSHPLFQSPFARLSHWLRTHTWALWCLASPSASVSAWATASALGRLLPLHTDRLRLFGFDIIGRRFWPRLPFHGPEPRFLWETHPACRPPVLFADSAFECQILAGLANRCSPSPFWSRLFPTASPPSWVAYSALALAAVPLAALALRWFYGPDSPQALHDQYHATFHPDPWTLDLPRRLRRFERESFMRTGSAPLPLSLPPPEGSLLPVEPPLAPSDPEPALEPSPPAASVPAPAPAPASEPPPSPESVAPPVAVVAPAVQPARAPSPSPALLGAELRFGDLPPVSAWDSDPEISKLGESTQGTVFAVTPGPRAPEPDTARLDADPSASGPVMEFRELQKGAYIEPTGAFLTRARNSVSSSIPYPTRAACLLVAVSQATGLPTRTLWAALCANLPDSVLDDGSLATLGLTTDHFAVLARIFSLRCRFVSEHGDVELGLHDATSRFTIRHTPGHFELVADNFSLPALVGASSVPGADLAEACKRFVAPDRTVLPFRDVHIHRTDVRRAKNLISNMKNGFDGVMAQANPLDPKSARERFLMLDSCLDIAAPRRVRLIHIAGFAGCGKSWPISHLLRTPAFRVFKLAVPTTELRDEWKALMDPRDQDKWRFGTWESSLLKTARVLVIDEVYKMPRGYLDLAIHADAAIQFVILLGDPIQGEYHSTHPSSSNARLSPEHRYLRPYVDFYCFWSRRIPQNVARVLDVPTTSTEMGFARYSQQFPFFGKILISARDSAKSLADCGYHAVTIASSQGSTIAGPAYVHLDNHSRRLSHQHSLVAITRSKSGIVFTGDKAAADGTSSANLLFSAVLLDRRLSVRSLFSALLPCCPFVTEPPTSRAVLLRGAGYGVARPLRARDAPPLGPDYVGDVILDSSAPILGDGSANAPQVSTHFLPETRRPLHFDIPSARHQVADHPLAPDHSACAIEPVYPGESFESLASLFLPPTDAESKETYFRGEMSNQFPHLDKPFELGAQTSSLLAPLHNSKHDPTLLPASIGKRLRFRHSEAPYVIAPRDEILGSLLYAAACRAYHRSPRDVEPFDPDLYAECINLNEFAQLSSKTQATIMANANRSDPDWRWSAVRIFAKTQHKVNEGSLFGSWKACQTLALMHDAVVLLLGPVKKYQRFFDQRDRPSTLYVHAGHTPFEMADWCRAHLTPAVKLANDYTAFDQSQHGEAVVFERYKMNRLSIPAELVDLHVYLKTNVSTQFGPLTCMRLTGEPGTYDDNTDYNIAVLHLEYAVGSTPLMVSGDDSLLDSEPPVRDQWSAIAPMLALTFKKERGRYATFCGYYVGFTGAVRSPPALFAKLMIAVDDGSISDKLIAYLTEFTVGHSSGDAFWTILPVEAVPYQSACFDFFCRRAPAQAKVMLRLGEAPESLLSLAFEGLKWASHSVYALMNSSHRRQLLHSSRRPRSLPEDPEVSQLQGELLHQFQSLHLPLRGGHMPNPLAALFRLLQQSSSLGPTYAVAPIARAPQVLPPSMADNATQVGPVPPRDDRVDRQPPLPDPPRVLETAPSHFLDLPFQWKVTDFTGYAAYHGTDDLSASAVLTTLCAPYRHAELLYVEISVAPCPPSFSKPIMFTVVWTPATLSPADGKETDYYGGRQITVGGPVMLSSTTAVPADLARMNPFIKSSVSYNDTPRWTMSVPAVTGGDTKIPLATAFVRGIVRVSAPSGAATPSA.

In terms of domain architecture, Alphavirus-like MT spans 65-226 (SGFGHAAHPH…TQPRSALDWL (162 aa)). Disordered regions lie at residues 544–603 (GSAP…ESVA) and 661–682 (VTPGPRAPEPDTARLDADPSAS). Residues 550–599 (LSLPPPEGSLLPVEPPLAPSDPEPALEPSPPAASVPAPAPAPASEPPPSP) are compositionally biased toward pro residues. Over residues 668-677 (PEPDTARLDA) the composition is skewed to basic and acidic residues. Residues 669 to 824 (EPDTARLDAD…SLPALVGASS (156 aa)) enclose the Peptidase C21 domain. Active-site for protease activity residues include cysteine 723 and histidine 806. The (+)RNA virus helicase ATP-binding domain occupies 882–1039 (DPKSARERFL…YLRPYVDFYC (158 aa)). Residues 1040 to 1172 (FWSRRIPQNV…RRLSVRSLFS (133 aa)) enclose the (+)RNA virus helicase C-terminal domain. The 107-residue stretch at 1508-1614 (AVKLANDYTA…DSEPPVRDQW (107 aa)) folds into the RdRp catalytic domain. The disordered stretch occupies residues 1828–1854 (SMADNATQVGPVPPRDDRVDRQPPLPD).

Belongs to the Tymoviridae non-structural replication polyprotein family. Specific enzymatic cleavages by the host yield mature proteins.

The protein localises to the virion. It catalyses the reaction RNA(n) + a ribonucleoside 5'-triphosphate = RNA(n+1) + diphosphate. The catalysed reaction is Thiol-dependent hydrolysis of ester, thioester, amide, peptide and isopeptide bonds formed by the C-terminal Gly of ubiquitin (a 76-residue protein attached to proteins as an intracellular targeting signal).. Its function is as follows. Acts as a cysteine protease, methyltransferase and deubiquitinase. The cysteine protease activity cleaves the polyprotein giving rise to mature proteins. The methyltransferase domain is probably involved in viral RNA capping. The deubiquitylating activity counteracts the degradation of the viral polymerase mediated by the host ubiquitin-proteasome system. The polymerase is thus stabilized and infectivity is increased. RNA-directed RNA polymerase is responsible for the replication and transcription of the genome. In terms of biological role, capsid protein CP1 and CP2 assemble to form an icosahedral capsid, about 30 nm in diameter, and consisting of capsid proteins CP1 and CP2 in a 1:3 ratio. The capsid encapsulates the single-stranded RNA genome. While CP1 is produced as a C-terminal fusion of the replication protein, CP2 may be expressed from a 3'-co-terminal subgenomic RNA. In Zea mays (Maize), this protein is Genome polyprotein.